Reading from the N-terminus, the 732-residue chain is MHCHNDDVRFSSSSIRIHSPSPKEQHSLLTNLQSCSKTFVSHLSNTRNSLNQMLQSLKNRHTPPPRSVRRPNLPTQMLNSVTQLMIGKSSPISLSLIQSTQFNWSESRDENVETIRGLSSPLLCCASLSLTRPNESTQSVEGKDTVQQQKGHSVSRNAEERVLISEVLVRTKDGEELERKDLEMEALAALKACRANSALTIREVQEDVHRIIESGYFCSCTPVAVDTRDGIRLMFQVEPNQEFRGLVCENANVLPSKFIHEAFRDGFGKVINIKRLEEAITSINGWYMERGLFGIVSDIDTLSGGIVRLQVAEAEVNNISIRFLDRKTGEPTKGKTSPETILRQLTTKKGQVYSMLQGKRDVDTVLAMGIMEDVSIIPQPAGDSGKVDLIMNCVERPSGGFSAGGGISSGITSGPLSGLIGSFAYSHRNLFGRNQKLNVSLERGQIDSIFRINYTDPWIEGDDKRTSRSIMVQNSRTPGNLVHGNQPDNSSLTIGRVTAGVEYSRPFRPKWNGTAGLIFQHAGARDEQGNPIIKDFYSSPLTASGKPHDETMLAKLESIYTGSGDQGSTMFAFNMEQGLPVLPEWLCFNRVTGRARKGIHIGPARFLFSLSGGHVVGKFSPHEAFVIGGTNSVRGYEEGAVGSGRSYVVGSGELSFPVRGPVEGVIFTDYGTDMGSGSTVPGDPAGARLKPGSGYGYGLGVRVDSPLGPLRLEYAFNDQHAGRFHFGVGLRN.

Disordered stretches follow at residues 1–23 (MHCH…PSPK) and 135–154 (ESTQ…GHSV). A compositionally biased stretch (low complexity) spans 11–20 (SSSSIRIHSP). The POTRA domain occupies 314–396 (AEVNNISIRF…VDLIMNCVER (83 aa)).

It belongs to the OEP80 (TC 1.B.33.2) family.

Its subcellular location is the plastid. The protein localises to the chloroplast outer membrane. Its function is as follows. Plays an essential role during early stages of plastid development. This chain is Outer envelope protein 80, chloroplastic (OEP80), found in Arabidopsis thaliana (Mouse-ear cress).